The sequence spans 874 residues: Coatomer subunit gamma-1 (874 aa).

The segment covering 1-11 (MLKKFDKKDEE) has biased composition (basic and acidic residues). The tract at residues 1-21 (MLKKFDKKDEESGGGSNPFQH) is disordered. HEAT repeat units follow at residues 64–101 (TEATEAFFAMTKLFQSNDPTLRRMCYLTIKEMSCIAED), 283–320 (KELAPAVSVLQLFCSSPKAALRYAAVRTLNKVAMKHPS), 322–355 (VTACNLDLENLVTDANRSIATLAITTLLKTGSEG), and 356–392 (SIDRLMKQISSFMSEISDEFKVVVVQAISALCQKYPR). Thr-594 is subject to Phosphothreonine. An interaction with ZNF289/ARFGAP2 region spans residues 609–874 (RQEIFQEQLA…PVDIVLASVG (266 aa)).

The protein belongs to the COPG family. Oligomeric complex that consists of at least the alpha, beta, beta', gamma, delta, epsilon and zeta subunits. Interacts with ZNF289/ARFGAP2 through its C-terminal appendage domain. Interacts with EGFR upon EGF treatment; interaction is essential for regulation of EGF-dependent nuclear transport of EGFR by retrograde trafficking from the Golgi to the ER. The coatomer interacts with KDEL receptors; the interaction is important for retrograde trafficking of KDEL-bearing proteins from the Golgi to the endoplasmic reticulum. Interacts with COPB1. Interacts with TMED10 (via C-terminus). Interacts with TMED2, TMED3, TMED7 and TMED9.

It localises to the cytoplasm. Its subcellular location is the cytosol. The protein resides in the golgi apparatus membrane. It is found in the cytoplasmic vesicle. The protein localises to the COPI-coated vesicle membrane. In terms of biological role, the coatomer is a cytosolic protein complex that binds to dilysine motifs and reversibly associates with Golgi non-clathrin-coated vesicles, which further mediate biosynthetic protein transport from the ER, via the Golgi up to the trans Golgi network. Coatomer complex is required for budding from Golgi membranes, and is essential for the retrograde Golgi-to-ER transport of dilysine-tagged proteins. In mammals, the coatomer can only be recruited by membranes associated to ADP-ribosylation factors (ARFs), which are small GTP-binding proteins; the complex also influences the Golgi structural integrity, as well as the processing, activity, and endocytic recycling of LDL receptors. Required for limiting lipid storage in lipid droplets. Involved in lipid homeostasis by regulating the presence of perilipin family members PLIN2 and PLIN3 at the lipid droplet surface and promoting the association of adipocyte triglyceride lipase (PNPLA2) with the lipid droplet surface to mediate lipolysis. This is Coatomer subunit gamma-1 (COPG1) from Bos taurus (Bovine).